Consider the following 274-residue polypeptide: Bis(5'-nucleosyl)-tetraphosphatase, symmetrical (274 aa).

This sequence belongs to the Ap4A hydrolase family.

It carries out the reaction P(1),P(4)-bis(5'-adenosyl) tetraphosphate + H2O = 2 ADP + 2 H(+). Its function is as follows. Hydrolyzes diadenosine 5',5'''-P1,P4-tetraphosphate to yield ADP. This chain is Bis(5'-nucleosyl)-tetraphosphatase, symmetrical, found in Shewanella baltica (strain OS185).